Here is a 931-residue protein sequence, read N- to C-terminus: MDMFPLTWVFLALYFSGHEVRSQQDPPCGGRLNSKDAGYITSPGYPQDYPSHQNCEWIVYAPEPNQKIVLNFNPHFEIEKHDCKYDFIEIRDGDSESADLLGKHCGNIAPPTIISSGSVLYIKFTSDYARQGAGFSLRYEIFKTGSEDCSKNFTSPNGTIESPGFPEKYPHNLDCTFTILAKPRMEIILQFLTFDLEHDPLQVGEGDCKYDWLDIWDGIPHVGPLIGKYCGTKTPSKLRSSTGILSLTFHTDMAVAKDGFSARYYLIHQEPPENFQCNVPLGMESGRIANEQISASSTFSDGRWTPQQSRLHGDDNGWTPNLDSNKEYLQVDLRFLTMLTAIATQGAISRETQKGYYVKSYKLEVSTNGEDWMVYRHGKNHKIFQANNDATEVVLNKLHMPLLTRFIRIRPQTWHLGIALRLELFGCRVTDAPCSNMLGMLSGLIADTQISASSTREYLWSPSAARLVSSRSGWFPRNPQAQPGEEWLQVDLGTPKTVKGVIIQGARGGDSITAVEARAFVRKFKVSYSLNGKDWEYIQDPRTQQTKLFEGNMHYDTPDIRRFDPVPAQYVRVYPERWSPAGIGMRLEVLGCDWTDSKPTVETLGPTVKSEETTTPYPMDEDATECGENCSFEDDKDLQLPSGFNCNFDFPEETCGWVYDHAKWLRSTWISSANPNDRTFPDDKNFLKLQSDGRREGQYGRLISPPVHLPRSPVCMEFQYQAMGGHGVALQVVREASQESKLLWVIREDQGSEWKHGRIILPSYDMEYQIVFEGVIGKGRSGEISIDDIRISTDVPLENCMEPISAFAGEDFKVDIPETHGGEGYEDEIDDEYEGDWSNSSSSTSGAGDPSSGKEKSWLYTLDPILITIIAMSSLGVLLGATCAGLLLYCTCSYSGLSSRSCTTLENYNFELYDGLKHKVKINHQKCCSEA.

Residues 1–20 form the signal peptide; it reads MDMFPLTWVFLALYFSGHEV. Topologically, residues 21 to 864 are extracellular; sequence RSQQDPPCGG…EKSWLYTLDP (844 aa). 3 disulfides stabilise this stretch: cysteine 28/cysteine 55, cysteine 83/cysteine 105, and cysteine 149/cysteine 175. 2 consecutive CUB domains span residues 28–142 and 149–267; these read CGGR…YEIF and CSKN…YYLI. N-linked (GlcNAc...) asparagine glycosylation is found at asparagine 152 and asparagine 157. 3 residues coordinate Ca(2+): glutamate 197, aspartate 211, and aspartate 252. Cysteine 208 and cysteine 230 form a disulfide bridge. Cystine bridges form between cysteine 277–cysteine 427 and cysteine 434–cysteine 592. F5/8 type C domains follow at residues 277-427 and 434-592; these read CNVP…LFGC and CSNM…VLGC. The segment covering 298-310 has biased composition (polar residues); the sequence is TFSDGRWTPQQSR. The interval 298–317 is disordered; it reads TFSDGRWTPQQSRLHGDDNG. The interval 601 to 621 is disordered; that stretch reads VETLGPTVKSEETTTPYPMDE. Asparagine 629 carries N-linked (GlcNAc...) asparagine glycosylation. The region spanning 642–802 is the MAM domain; it reads SGFNCNFDFP…TDVPLENCME (161 aa). Positions 819–854 are disordered; the sequence is THGGEGYEDEIDDEYEGDWSNSSSSTSGAGDPSSGK. Over residues 824–835 the composition is skewed to acidic residues; it reads GYEDEIDDEYEG. The segment covering 836–851 has biased composition (low complexity); sequence DWSNSSSSTSGAGDPS. A glycan (N-linked (GlcNAc...) asparagine) is linked at asparagine 839. A helical membrane pass occupies residues 865 to 889; that stretch reads ILITIIAMSSLGVLLGATCAGLLLY. At 890 to 931 the chain is on the cytoplasmic side; it reads CTCSYSGLSSRSCTTLENYNFELYDGLKHKVKINHQKCCSEA.

Belongs to the neuropilin family. In terms of assembly, heterodimer with NRP1. Binds PLXNB1. Expressed in developing CNS, PNS and in some nonneural tissues including limb buds, developing bones, muscles, intestinal epithelium, kidney, lung and submandibular gland.

It localises to the membrane. In terms of biological role, high affinity receptor for semaphorins 3C, 3F, VEGF-165 and VEGF-145 isoforms of VEGF, and the PLGF-2 isoform of PGF. The polypeptide is Neuropilin-2 (Nrp2) (Mus musculus (Mouse)).